Here is a 125-residue protein sequence, read N- to C-terminus: Allatostatin (125 aa).

Positions 1 to 26 are cleaved as a signal peptide; it reads MKTSAYNVYLGVVAAMLALLFVTINA. A propeptide spanning residues 27–106 is cleaved from the precursor; sequence APMEADDETA…SRLARQWRAD (80 aa). Gln109 is modified (pyrrolidone carboxylic acid).

It belongs to the allatostatin family.

The protein localises to the secreted. Its function is as follows. Strongly inhibits juvenile hormone biosynthesis in vitro by the corpora allata from fifth-stadium larvae and adult females. This chain is Allatostatin, found in Spodoptera frugiperda (Fall armyworm).